The sequence spans 527 residues: Fusicoccadiene C-8 hydroxylase (527 aa).

A helical membrane pass occupies residues G15–F35. N125 is a glycosylation site (N-linked (GlcNAc...) asparagine). Heme is bound at residue C465. An N-linked (GlcNAc...) asparagine glycan is attached at N496.

Belongs to the cytochrome P450 family. Heme is required as a cofactor.

It is found in the membrane. Its pathway is mycotoxin biosynthesis. In terms of biological role, cytochrome P450 monooxygenase; part of the gene cluster that mediates the biosynthesis of the diterpene glucoside brassicicene C. In the first step of the brassicicene C biosynthesis, the bifunctional diterpene synthase bsc8 that possesses both prenyl transferase and terpene cyclase activity, converts isopentenyl diphosphate and dimethylallyl diphosphate into geranylgeranyl diphosphate (GGDP) that is further converted into fusicocca-2,10(14)-diene, the first precursor for brassicicene C. Fusicocca-2,10(14)-diene is then substrate of cytochrome P450 monooxygenase bsc1 for hydroxylation at the C-8 position. Oxidation at C-16 position to aldehyde is then catalyzed by the cytochrome P450 monooyxygenase bsc7, yielding fusicocca-2,10(14)-diene-8-beta,16-diol. Follows the isomerization of the double bond and reduction of aldehyde to alcohol catalyzed by the short-chain dehydrogenase/reductase bsc3 to yield the diol compound fusicocca-1,10(14)-diene-8 beta,16-diol. The next step is the oxidation at the C-3 position of fusicocca-2,10(14)-diene-8-beta,16-diol catalyzed by the alpha-ketoglutarate dependent dioxygenase bsc9, to produce a triol compound. Methylation of the hydroxy group at position 16 is performed by the methyltransferase bsc6. 16-O-methylation is followed by oxidation at the C-13 position to ketone and an alkyl shift of the methyl group leads to brassicicene C. Although the probable acetyltransferase bsc4 is included in the gene cluster, no acetylation reactions are necessary for brassicicene C biosynthesis. However, the fact that brassicicene E, which is a structurally related compound having an acetoxy group at position 12, was previously isolated from another strain of A.brassicicola suggests that the ATCC 96836 strain might also produce a small amount of brassicicene E. The polypeptide is Fusicoccadiene C-8 hydroxylase (Alternaria brassicicola (Dark leaf spot agent)).